Consider the following 369-residue polypeptide: Iron-sulfur cluster carrier protein (369 aa).

An ATP-binding site is contributed by 115 to 122 (GKGGVGKS).

This sequence belongs to the Mrp/NBP35 ATP-binding proteins family. In terms of assembly, homodimer. Holo-ApbC forms a mixture of homodimers and homotetramers.

Functionally, binds and transfers iron-sulfur (Fe-S) clusters to target apoproteins. Can hydrolyze ATP. Both activities are required for function in vivo, but the ability to hydrolyze ATP is not necessary for Fe-S cluster transfer. The polypeptide is Iron-sulfur cluster carrier protein (Salmonella typhimurium (strain LT2 / SGSC1412 / ATCC 700720)).